Reading from the N-terminus, the 116-residue chain is Putative pterin-4-alpha-carbinolamine dehydratase (116 aa).

The protein belongs to the pterin-4-alpha-carbinolamine dehydratase family.

The catalysed reaction is (4aS,6R)-4a-hydroxy-L-erythro-5,6,7,8-tetrahydrobiopterin = (6R)-L-erythro-6,7-dihydrobiopterin + H2O. This is Putative pterin-4-alpha-carbinolamine dehydratase from Paracidovorax citrulli (strain AAC00-1) (Acidovorax citrulli).